The sequence spans 136 residues: Peptide deformylase (136 aa).

Fe cation contacts are provided by Cys-85 and His-126. Residue Glu-127 is part of the active site. His-130 contributes to the Fe cation binding site.

It belongs to the polypeptide deformylase family. Fe(2+) serves as cofactor.

The enzyme catalyses N-terminal N-formyl-L-methionyl-[peptide] + H2O = N-terminal L-methionyl-[peptide] + formate. Functionally, removes the formyl group from the N-terminal Met of newly synthesized proteins. Requires at least a dipeptide for an efficient rate of reaction. N-terminal L-methionine is a prerequisite for activity but the enzyme has broad specificity at other positions. In Clostridium beijerinckii (strain ATCC 51743 / NCIMB 8052) (Clostridium acetobutylicum), this protein is Peptide deformylase.